Reading from the N-terminus, the 336-residue chain is G patch domain and ankyrin repeat-containing protein 1 homolog (336 aa).

ANK repeat units lie at residues 123–152 and 156–185; these read FGWT…QVET and SGNT…LEET. Residues 240-286 form the G-patch domain; sequence AKNRGLQLMVKQGWDQEHGLGPSQSGRLYPVKTVLRKQRTGLGIEQQ.

In Drosophila melanogaster (Fruit fly), this protein is G patch domain and ankyrin repeat-containing protein 1 homolog.